A 104-amino-acid polypeptide reads, in one-letter code: BLOC-1-related complex subunit 7 (104 aa).

This sequence belongs to the BORCS7 family.

It localises to the lysosome membrane. In terms of biological role, as part of a BORC-like complex may play a role in lysosomes movement and localization at the cell periphery. Associated with the cytosolic face of lysosomes, this complex may couple lysosomes to microtubule plus-end-directed kinesin motor. The polypeptide is BLOC-1-related complex subunit 7 (Xenopus tropicalis (Western clawed frog)).